Consider the following 396-residue polypeptide: Probable arginine kinase F46H5.3 (396 aa).

The 83-residue stretch at 47-129 folds into the Phosphagen kinase N-terminal domain; that stretch reads KIEEGYAKLQ…FDPLIQDYHN (83 aa). Residue 102-106 participates in substrate binding; the sequence is GVGVY. A Phosphagen kinase C-terminal domain is found at 159–396; that stretch reads FINSTRIRCG…AHLIALEKAA (238 aa). Residues 162 to 166 and histidine 226 contribute to the ATP site; that span reads STRIR. Glutamate 266 lines the substrate pocket. Arginine 270 lines the ATP pocket. A substrate-binding site is contributed by cysteine 312. Residues 321 to 325, 349 to 354, and aspartate 364 each bind ATP; these read RASVH and RGIHGE. Position 354 (glutamate 354) interacts with substrate.

It belongs to the ATP:guanido phosphotransferase family.

It catalyses the reaction L-arginine + ATP = N(omega)-phospho-L-arginine + ADP + H(+). The chain is Probable arginine kinase F46H5.3 from Caenorhabditis elegans.